A 117-amino-acid chain; its full sequence is SPbeta prophage-derived uncharacterized protein YosL (117 aa).

This Bacillus subtilis (strain 168) protein is SPbeta prophage-derived uncharacterized protein YosL (yosL).